The following is a 160-amino-acid chain: Crossover junction endodeoxyribonuclease RuvC (160 aa).

Residues Asp-7, Glu-73, and Asp-145 contribute to the active site. Mg(2+) contacts are provided by Asp-7, Glu-73, and Asp-145.

It belongs to the RuvC family. As to quaternary structure, homodimer which binds Holliday junction (HJ) DNA. The HJ becomes 2-fold symmetrical on binding to RuvC with unstacked arms; it has a different conformation from HJ DNA in complex with RuvA. In the full resolvosome a probable DNA-RuvA(4)-RuvB(12)-RuvC(2) complex forms which resolves the HJ. Requires Mg(2+) as cofactor.

Its subcellular location is the cytoplasm. It carries out the reaction Endonucleolytic cleavage at a junction such as a reciprocal single-stranded crossover between two homologous DNA duplexes (Holliday junction).. The RuvA-RuvB-RuvC complex processes Holliday junction (HJ) DNA during genetic recombination and DNA repair. Endonuclease that resolves HJ intermediates. Cleaves cruciform DNA by making single-stranded nicks across the HJ at symmetrical positions within the homologous arms, yielding a 5'-phosphate and a 3'-hydroxyl group; requires a central core of homology in the junction. The consensus cleavage sequence is 5'-(A/T)TT(C/G)-3'. Cleavage occurs on the 3'-side of the TT dinucleotide at the point of strand exchange. HJ branch migration catalyzed by RuvA-RuvB allows RuvC to scan DNA until it finds its consensus sequence, where it cleaves and resolves the cruciform DNA. The polypeptide is Crossover junction endodeoxyribonuclease RuvC (Synechococcus sp. (strain CC9311)).